A 310-amino-acid polypeptide reads, in one-letter code: 2-ketogluconate reductase (310 aa).

Residues 151-152 and 227-229 each bind NADP(+); these read HI and IAR. Catalysis depends on residues Arg-229 and Glu-258. His-276 serves as the catalytic Proton donor.

Belongs to the D-isomer specific 2-hydroxyacid dehydrogenase family. In terms of assembly, homohexamer.

It carries out the reaction D-gluconate + NADP(+) = 2-dehydro-D-gluconate + NADPH + H(+). Its function is as follows. Catalyzes the reduction of 2-keto-D-gluconate to gluconate. Can also catalyze the reduction of 2-keto-L-gulonate. Can use both NADH and NADPH efficiently, with a slight preference for NADPH. The sequence is that of 2-ketogluconate reductase from Gluconobacter oxydans (strain 621H) (Gluconobacter suboxydans).